We begin with the raw amino-acid sequence, 589 residues long: RNA-directed RNA polymerase subunit beta (589 aa).

The RdRp catalytic domain maps to 259–391 (RRAHEGSVTN…TNTKKTFSEG (133 aa)). 3 residues coordinate Mg(2+): D274, D359, and D360.

Homodimer; the replicase complex can dimerize. Part of the viral RNA-dependent RNA polymerase complex, the other subunits are the host ribosomal protein S1, EF-Tu and EF-Ts. S1 is needed for the initiation of genomic RNA (+)-strand replication. The cofactor is Mg(2+).

It catalyses the reaction RNA(n) + a ribonucleoside 5'-triphosphate = RNA(n+1) + diphosphate. Functionally, this is the catalytic subunit of the viral RNA-dependent RNA polymerase complex. This complex is involved in viral RNA replication that produces (+)-stranded genomes via a complementary, (-)-stranded intermediate. Binds RNA cooperatively with the host ribosomal protein S1. The polypeptide is RNA-directed RNA polymerase subunit beta (Escherichia coli (Bacteriophage Q-beta)).